The chain runs to 147 residues: Myoglobin (147 aa).

The region spanning His-2 to Lys-141 is the Globin domain. His-60 is a nitrite binding site. His-60 serves as a coordination point for O2. His-89 contributes to the heme b binding site.

It belongs to the globin family. Monomeric.

It localises to the cytoplasm. Its subcellular location is the sarcoplasm. The catalysed reaction is Fe(III)-heme b-[protein] + nitric oxide + H2O = Fe(II)-heme b-[protein] + nitrite + 2 H(+). It catalyses the reaction H2O2 + AH2 = A + 2 H2O. Functionally, monomeric heme protein which primary function is to store oxygen and facilitate its diffusion within muscle tissues. Reversibly binds oxygen through a pentacoordinated heme iron and enables its timely and efficient release as needed during periods of heightened demand. Depending on the oxidative conditions of tissues and cells, and in addition to its ability to bind oxygen, it also has a nitrite reductase activity whereby it regulates the production of bioactive nitric oxide. Under stress conditions, like hypoxia and anoxia, it also protects cells against reactive oxygen species thanks to its pseudoperoxidase activity. The sequence is that of Myoglobin (mb) from Cyprinus carpio (Common carp).